The sequence spans 480 residues: 6-phosphogluconate dehydrogenase, decarboxylating (480 aa).

NADP(+) contacts are provided by residues 11–16, 34–36, 76–78, and Asn-104; these read GLAVMG, NRS, and IKA. Substrate contacts are provided by residues Asn-104 and 130 to 132; that span reads SGG. The active-site Proton acceptor is the Lys-184. Position 187 to 188 (187 to 188) interacts with substrate; the sequence is HN. Glu-191 functions as the Proton donor in the catalytic mechanism. Positions 192, 261, 288, 448, and 454 each coordinate substrate.

This sequence belongs to the 6-phosphogluconate dehydrogenase family. As to quaternary structure, homodimer.

It catalyses the reaction 6-phospho-D-gluconate + NADP(+) = D-ribulose 5-phosphate + CO2 + NADPH. The protein operates within carbohydrate degradation; pentose phosphate pathway; D-ribulose 5-phosphate from D-glucose 6-phosphate (oxidative stage): step 3/3. Functionally, catalyzes the oxidative decarboxylation of 6-phosphogluconate to ribulose 5-phosphate and CO(2), with concomitant reduction of NADP to NADPH. This chain is 6-phosphogluconate dehydrogenase, decarboxylating (gnd), found in Chlamydia trachomatis serovar D (strain ATCC VR-885 / DSM 19411 / UW-3/Cx).